The following is a 160-amino-acid chain: uncharacterized protein (160 aa).

The first 23 residues, 1–23, serve as a signal peptide directing secretion; it reads MSIPHSVFSALLVFVALATTTLA. At 24–132 the chain is on the cytoplasmic side; sequence STEACLPTNK…DPNTAYWSSD (109 aa). Residues 133–155 form a helical membrane-spanning segment; it reads LFGFYTTPTNVTVEMTGYLIWSM. Residues 156–160 lie on the Extracellular side of the membrane; that stretch reads GNRRR.

This sequence to yeast protein FLO1.

It localises to the cell membrane. This is an uncharacterized protein from Saccharomyces cerevisiae (strain ATCC 204508 / S288c) (Baker's yeast).